A 206-amino-acid polypeptide reads, in one-letter code: Large ribosomal subunit protein uL3 (206 aa).

Residues 127–151 (SGGPSSHGSKFHRHLGGTGQATTPA) are disordered.

It belongs to the universal ribosomal protein uL3 family. As to quaternary structure, part of the 50S ribosomal subunit. Forms a cluster with proteins L14 and L19.

Functionally, one of the primary rRNA binding proteins, it binds directly near the 3'-end of the 23S rRNA, where it nucleates assembly of the 50S subunit. The protein is Large ribosomal subunit protein uL3 of Borrelia garinii subsp. bavariensis (strain ATCC BAA-2496 / DSM 23469 / PBi) (Borreliella bavariensis).